Here is a 289-residue protein sequence, read N- to C-terminus: S-methyl-5'-thioadenosine phosphorylase (289 aa).

Residues serine 11, 53 to 54 (RH), and 86 to 87 (SA) each bind phosphate. Methionine 187 is a binding site for substrate. Threonine 188 provides a ligand contact to phosphate. 211–213 (DYD) is a binding site for substrate.

This sequence belongs to the PNP/MTAP phosphorylase family. MTAP subfamily. As to quaternary structure, homohexamer. Dimer of a homotrimer.

The enzyme catalyses S-methyl-5'-thioadenosine + phosphate = 5-(methylsulfanyl)-alpha-D-ribose 1-phosphate + adenine. It functions in the pathway amino-acid biosynthesis; L-methionine biosynthesis via salvage pathway; S-methyl-5-thio-alpha-D-ribose 1-phosphate from S-methyl-5'-thioadenosine (phosphorylase route): step 1/1. Catalyzes the reversible phosphorylation of S-methyl-5'-thioadenosine (MTA) to adenine and 5-methylthioribose-1-phosphate. Involved in the breakdown of MTA, a major by-product of polyamine biosynthesis. Responsible for the first step in the methionine salvage pathway after MTA has been generated from S-adenosylmethionine. Has broad substrate specificity with 6-aminopurine nucleosides as preferred substrates. This is S-methyl-5'-thioadenosine phosphorylase from Thermosynechococcus vestitus (strain NIES-2133 / IAM M-273 / BP-1).